Here is an 810-residue protein sequence, read N- to C-terminus: Transmembrane channel-like protein 6 (810 aa).

The disordered stretch occupies residues 1–26; sequence MAQSLALALDVPETTGDEGLEPSPYE. Over 1 to 205 the chain is Lumenal; that stretch reads MAQSLALALD…GAFSCCSRLR (205 aa). The span at 15–26 shows a compositional bias: acidic residues; it reads TGDEGLEPSPYE. Thr-88 carries the post-translational modification Phosphothreonine. Arg-93 bears the Omega-N-methylarginine mark. Asn-102 is a glycosylation site (N-linked (GlcNAc...) asparagine). Position 104 is a phosphothreonine (Thr-104). Ser-136 carries the post-translational modification Phosphoserine. A helical transmembrane segment spans residues 206–226; the sequence is YTCMLALHSLGLALLSGLYAA. Residues 227–253 are Cytoplasmic-facing; the sequence is RPWRYALKQIGGQFGSSVLSYFLFLKT. The helical transmembrane segment at 254–274 threads the bilayer; sequence LLAFNALMLLPLLAFLVGVQA. Residues 275-338 are Lumenal-facing; sequence AFPPDPAGPV…PRLGSLPYNM (64 aa). A glycan (N-linked (GlcNAc...) asparagine) is linked at Asn-311. The chain crosses the membrane as a helical span at residues 339–359; that stretch reads PLAYLFTMGATFFLTCIILVY. The Cytoplasmic portion of the chain corresponds to 360 to 429; that stretch reads SMSHSFGESY…PRSVCGQLRQ (70 aa). A helical membrane pass occupies residues 430 to 450; it reads VVVLGLGWLLCLGSTMGCTVA. The Lumenal portion of the chain corresponds to 451-468; the sequence is VLTFSEVMIQRPASGGQG. Residues 469–489 traverse the membrane as a helical segment; the sequence is VEALALPLVVSVLNLGASYLF. At 490 to 504 the chain is on the cytoplasmic side; it reads RGLATLERHDSPVLE. Residues 505 to 525 traverse the membrane as a helical segment; that stretch reads VYMAICRNLILKMAVLGVLCY. Residues 526–552 lie on the Lumenal side of the membrane; that stretch reads HWLGRRVATLQGQCWEDFVGQELYRFM. A helical transmembrane segment spans residues 553–573; that stretch reads VVDFIFMLLDSLFGELVWRLI. Topologically, residues 574-603 are cytoplasmic; the sequence is SEKKLKRGQKPEFDIARNVLDLIYGQTLTW. A helical transmembrane segment spans residues 604–624; sequence LGVLFSPLLPAVQILRLLFLF. Residues 625 to 649 lie on the Lumenal side of the membrane; it reads HIKKASLMANCQAPRRPWLASHMST. Residues 650-670 form a helical membrane-spanning segment; it reads VFLTLLCFPSFLGAAVFLCYA. The Cytoplasmic portion of the chain corresponds to 671-721; that stretch reads VWQVRPSSTCGPFRTLNTMYEAGTVWVRRLEHAGSGASWLPWLHHFLVENT. Residues 722 to 742 form a helical membrane-spanning segment; it reads FFLFLASALLLAVIYFNIQVV. The Lumenal portion of the chain corresponds to 743–810; that stretch reads KGQRKVICLL…QKEPCNPRSP (68 aa). The interval 775–810 is disordered; that stretch reads EEEGRSRPGRTQDATEPPAWHEDGGDQKEPCNPRSP. Basic and acidic residues predominate over residues 793–810; that stretch reads AWHEDGGDQKEPCNPRSP.

The protein belongs to the TMC family. Interacts with TMC8. Interacts and forms a complex with TMC8 and CIB1; the interaction stabilizes each component of the complex. Interacts and forms a complex with TMC8 and SLC30A1/ZNT1; the interaction regulates zinc transport into the ER. In terms of tissue distribution, widely expressed. Highly expressed in thymus, lung and spleen. Expressed in lymphocytes and peripheral lymphocytes. Expressed in small and medium dorsal root ganglion (DRG) neurons.

Its subcellular location is the endoplasmic reticulum membrane. Acts as a regulatory protein involved in the regulation of numerous cellular processes. Together with its homolog TMC8/EVER2, forms a complex with calcium-binding protein CIB1 in lymphocytes and keratynocytes where TMC6 and TMC8 stabilize CIB1 and reciprocally. Together with TMC8, also forms a complex with and activates zinc transporter ZNT1 at the ER membrane of keratynocytes, thereby facilitating zinc uptake into the ER. Down-regulates the activity of transcription factors induced by zinc and cytokines. Also plays a role in thermal sensation by inhibiting the M-channel (KCNQ2-KCNQ3 channel) current in primary sensory neurons. The sequence is that of Transmembrane channel-like protein 6 from Mus musculus (Mouse).